An 846-amino-acid chain; its full sequence is Aminopeptidase N (846 aa).

Residues glutamate 120 and 252–256 (GAMEN) contribute to the substrate site. A Zn(2+)-binding site is contributed by histidine 288. The Proton acceptor role is filled by glutamate 289. Residues histidine 292 and glutamate 311 each coordinate Zn(2+).

It belongs to the peptidase M1 family. Monomer. Requires Zn(2+) as cofactor.

The protein localises to the cytoplasm. The enzyme catalyses Release of an N-terminal amino acid, Xaa-|-Yaa- from a peptide, amide or arylamide. Xaa is preferably Ala, but may be most amino acids including Pro (slow action). When a terminal hydrophobic residue is followed by a prolyl residue, the two may be released as an intact Xaa-Pro dipeptide.. In terms of biological role, aminopeptidase with broad substrate specificity to several peptides. It has more affinity for oligopeptides than for dipeptides. It plays an essential role in the metabolism, it may be involved in nitrogen supply or protein turnover. This Lactococcus lactis subsp. cremoris (Streptococcus cremoris) protein is Aminopeptidase N (pepN).